Consider the following 126-residue polypeptide: UPF0538 protein C2orf76 homolog (126 aa).

Belongs to the UPF0538 family.

This Pongo abelii (Sumatran orangutan) protein is UPF0538 protein C2orf76 homolog.